We begin with the raw amino-acid sequence, 87 residues long: MKSFLVAFLIVLVFFCVEMKIGNGFKIHEVPEPTGKWCGYSVPMKPCINDDRVKRCIAENTHGWLMATGMCTSIPSLKDCYCMHQCP.

An N-terminal signal peptide occupies residues 1–24; that stretch reads MKSFLVAFLIVLVFFCVEMKIGNG. 3 disulfides stabilise this stretch: C38–C71, C47–C80, and C56–C82.

This sequence belongs to the DEFL family.

The protein localises to the secreted. In Arabidopsis thaliana (Mouse-ear cress), this protein is Putative defensin-like protein 317.